Here is a 376-residue protein sequence, read N- to C-terminus: Chaperone protein DnaJ (376 aa).

The 65-residue stretch at 4 to 68 folds into the J domain; that stretch reads DYYEILGVAR…ETRARYDRFG (65 aa). The disordered stretch occupies residues 102-121; sequence GGMGGPTQQRRRGGPARGDD. A CR-type zinc finger spans residues 136–218; sequence GGEKEIRISH…CDGKGTNQVT (83 aa). Residues cysteine 149, cysteine 152, cysteine 166, cysteine 169, cysteine 192, cysteine 195, cysteine 206, and cysteine 209 each coordinate Zn(2+). CXXCXGXG motif repeat units lie at residues 149 to 156, 166 to 173, 192 to 199, and 206 to 213; these read CETCSGSG, CSTCSGSG, CPTCNGTG, and CDACDGKG.

This sequence belongs to the DnaJ family. Homodimer. Requires Zn(2+) as cofactor.

Its subcellular location is the cytoplasm. In terms of biological role, participates actively in the response to hyperosmotic and heat shock by preventing the aggregation of stress-denatured proteins and by disaggregating proteins, also in an autonomous, DnaK-independent fashion. Unfolded proteins bind initially to DnaJ; upon interaction with the DnaJ-bound protein, DnaK hydrolyzes its bound ATP, resulting in the formation of a stable complex. GrpE releases ADP from DnaK; ATP binding to DnaK triggers the release of the substrate protein, thus completing the reaction cycle. Several rounds of ATP-dependent interactions between DnaJ, DnaK and GrpE are required for fully efficient folding. Also involved, together with DnaK and GrpE, in the DNA replication of plasmids through activation of initiation proteins. The sequence is that of Chaperone protein DnaJ from Trichormus variabilis (strain ATCC 29413 / PCC 7937) (Anabaena variabilis).